The following is a 364-amino-acid chain: DNA polymerase IV (364 aa).

The UmuC domain occupies 14 to 198; it reads IIHIDMDAFF…LPIEKFHGVG (185 aa). 2 residues coordinate Mg(2+): aspartate 18 and aspartate 116. Residue glutamate 117 is part of the active site.

The protein belongs to the DNA polymerase type-Y family. As to quaternary structure, monomer. The cofactor is Mg(2+).

It is found in the cytoplasm. It carries out the reaction DNA(n) + a 2'-deoxyribonucleoside 5'-triphosphate = DNA(n+1) + diphosphate. Poorly processive, error-prone DNA polymerase involved in untargeted mutagenesis. Copies undamaged DNA at stalled replication forks, which arise in vivo from mismatched or misaligned primer ends. These misaligned primers can be extended by PolIV. Exhibits no 3'-5' exonuclease (proofreading) activity. May be involved in translesional synthesis, in conjunction with the beta clamp from PolIII. This chain is DNA polymerase IV, found in Streptococcus pyogenes serotype M5 (strain Manfredo).